The sequence spans 202 residues: Transcriptional regulator SdrP (202 aa).

The 73-residue stretch at 117 to 189 folds into the HTH crp-type domain; it reads QRLKNRMAAA…YGKIQLLDLK (73 aa). The segment at residues 149-168 is a DNA-binding region (H-T-H motif); sequence HDELAAAVGSVRETVTKVIG.

Homodimer.

In terms of biological role, activates transcription. The consensus DNA-binding site of this transcriptional regulator is 5'-WWGTGAN(5-7)ACACWW-3' in which W is A or T and N is G, A, T or C. Regulated genes include those encoding proteins involved in nutrient and energy supply, redox control and polyadenylation of mRNA. Also regulates genes involved in oxidative stress response such as genes encoding manganese superoxide dismutase and catalase, and genes encoding a protein involved in nucleotide excision repair of damaged DNA and putative proteins involved in redox control, protein degradation and transcriptional regulation. This Thermus thermophilus (strain ATCC 27634 / DSM 579 / HB8) protein is Transcriptional regulator SdrP.